A 157-amino-acid polypeptide reads, in one-letter code: Protein-export protein SecB (157 aa).

It belongs to the SecB family. As to quaternary structure, homotetramer, a dimer of dimers. One homotetramer interacts with 1 SecA dimer.

The protein localises to the cytoplasm. Functionally, one of the proteins required for the normal export of preproteins out of the cell cytoplasm. It is a molecular chaperone that binds to a subset of precursor proteins, maintaining them in a translocation-competent state. It also specifically binds to its receptor SecA. The chain is Protein-export protein SecB from Rhodopseudomonas palustris (strain TIE-1).